We begin with the raw amino-acid sequence, 132 residues long: Large ribosomal subunit protein uL14 (132 aa).

Belongs to the universal ribosomal protein uL14 family. Part of the 50S ribosomal subunit. Forms a cluster with proteins L3 and L24e, part of which may contact the 16S rRNA in 2 intersubunit bridges.

Binds to 23S rRNA. Forms part of two intersubunit bridges in the 70S ribosome. The polypeptide is Large ribosomal subunit protein uL14 (Methanococcus aeolicus (strain ATCC BAA-1280 / DSM 17508 / OCM 812 / Nankai-3)).